The following is a 691-amino-acid chain: Dynamin-1-like protein (691 aa).

A Dynamin-type G domain is found at 22–301 (IIQLPQIAVV…LMHHIRDCLP (280 aa)). The interval 32 to 39 (GTQSSGKS) is G1 motif. 32-40 (GTQSSGKSS) is a GTP binding site. The interval 58–60 (VTR) is G2 motif. The tract at residues 145–148 (DLPG) is G3 motif. Residues 214–217 (TKLD) are G4 motif. GTP contacts are provided by residues 214–220 (TKLDLMD) and 245–248 (NRSQ). The segment at 244–247 (VNRS) is G5 motif. The tract at residues 343–488 (YCNTIEGTAK…NEMVHNLVAI (146 aa)) is middle domain. Basic and acidic residues-rich tracts occupy residues 522 to 531 (LPTSVPRDKM) and 551 to 563 (KKGDEGQGEEKTK). The interval 522-573 (LPTSVPRDKMAGGAQAEQEGGTGTWRGMLKKGDEGQGEEKTKLQSSIPASPQ) is disordered. Residues 599–690 (CEVIERLIKS…VIAEIRETHL (92 aa)) enclose the GED domain. An important for homodimerization region spans residues 609–623 (YFLIVRKNIQDSVPK).

This sequence belongs to the TRAFAC class dynamin-like GTPase superfamily. Dynamin/Fzo/YdjA family. In terms of assembly, homotetramer; dimerizes through the N-terminal GTP-middle region of one molecule binding to the GED domain of another DNM1L molecule. Oligomerizes in a GTP-dependent manner to form membrane-associated tubules with a spiral pattern.

It localises to the cytoplasm. Its subcellular location is the cytosol. The protein resides in the golgi apparatus. It is found in the endomembrane system. The protein localises to the mitochondrion outer membrane. It localises to the peroxisome. Its subcellular location is the membrane. The protein resides in the clathrin-coated pit. It is found in the cytoplasmic vesicle. The protein localises to the secretory vesicle. It localises to the synaptic vesicle membrane. It carries out the reaction GTP + H2O = GDP + phosphate + H(+). In terms of biological role, functions in mitochondrial and peroxisomal division. Mediates membrane fission through oligomerization into membrane-associated tubular structures that wrap around the scission site to constrict and sever the mitochondrial membrane through a GTP hydrolysis-dependent mechanism. The specific recruitment at scission sites is mediated by membrane receptors like MFF, MIEF1 and MIEF2 for mitochondrial membranes. While the recruitment by the membrane receptors is GTP-dependent, the following hydrolysis of GTP induces the dissociation from the receptors and allows DNM1L filaments to curl into closed rings that are probably sufficient to sever a double membrane. May play a role in the circadian control of mitochondrial ATP production. The polypeptide is Dynamin-1-like protein (Danio rerio (Zebrafish)).